The chain runs to 825 residues: MLDICLEKRVGTTLAAPKCNSSTVRFQGLAEGTKGTMKMDMEDADMTLWTEAEFEEKCTYIVNDHPWDSGADGGTSVQAEASLPRNLLFKYATNSEEVIGVMSKEYIPKGTRFGPLIGEIYTNDTVPKNANRKYFWRIYSRGELHHFIDGFNEEKSNWMRYVNPAHSPREQNLAACQNGMNIYFYTIKPIPANQELLVWYCRDFAERLHYPYPGELTMMNLTQTQSSLKQPSTEKNELCPKNVPKREYSVKEILKLDSNPSKGKDLYRSNISPLTSEKDLDDFRRRGSPEMPFYPRVVYPIRAPLPEDFLKASLAYGIERPTYITRSPIPSSTTPSPSARSSPDQSLKSSSPHSSPGNTVSPVGPGSQEHRDSYAYLNASYGTEGLGSYPGYAPLPHLPPAFIPSYNAHYPKFLLPPYGMNCNGLSAVSSMNGINNFGLFPRLCPVYSNLLGGGSLPHPMLNPTSLPSSLPSDGARRLLQPEHPREVLVPAPHSAFSFTGAAASMKDKACSPTSGSPTAGTAATAEHVVQPKATSAAMAAPSSDEAMNLIKNKRNMTGYKTLPYPLKKQNGKIKYECNVCAKTFGQLSNLKVHLRVHSGERPFKCQTCNKGFTQLAHLQKHYLVHTGEKPHECQVCHKRFSSTSNLKTHLRLHSGEKPYQCKVCPAKFTQFVHLKLHKRLHTRERPHKCSQCHKNYIHLCSLKVHLKGNCAAAPAPGLPLEDLTRINEEIEKFDISDNADRLEDVEDDISVISVVEKEILAVVRKEKEETGLKVSLQRNMGNGLLSSGCSLYESSDLPLMKLPPSNPLPLVPVKVKQETVEPMDP.

The region spanning 84–201 (PRNLLFKYAT…ANQELLVWYC (118 aa)) is the SET domain. Low complexity predominate over residues 324–361 (ITRSPIPSSTTPSPSARSSPDQSLKSSSPHSSPGNTVS). The tract at residues 324 to 369 (ITRSPIPSSTTPSPSARSSPDQSLKSSSPHSSPGNTVSPVGPGSQE) is disordered. The interaction with PIAS1 stretch occupies residues 527–574 (HVVQPKATSAAMAAPSSDEAMNLIKNKRNMTGYKTLPYPLKKQNGKIK). C2H2-type zinc fingers lie at residues 575–597 (YECN…LRVH), 603–625 (FKCQ…YLVH), 631–653 (HECQ…LRLH), and 659–681 (YQCK…KRLH). Lys-816 participates in a covalent cross-link: Glycyl lysine isopeptide (Lys-Gly) (interchain with G-Cter in SUMO1); alternate. A Glycyl lysine isopeptide (Lys-Gly) (interchain with G-Cter in SUMO2); alternate cross-link involves residue Lys-816.

This sequence belongs to the class V-like SAM-binding methyltransferase superfamily. As to quaternary structure, interacts with PRMT5. Interacts with FBXO10. Interacts with FBXO11. Interacts with multiple nuclear sumoylation E3 ligases, including CBX4, PIAS1, PIAS2, PIAS3, PIAS4, PML and RNF4, but not RANBP2. Interacts with LDB1, SMARCD3 and SMARCC1. Interacts with EEIG1; following TNFSF11/RANKL stimulation in bone marrow-derived macrophages, the interaction promotes the binding of PRDM1/BLIMP1 to the gene promoter of IRF8. In terms of processing, sumoylation at Lys-816 by PIAS1 augments transcriptional repressor activity, and is critical for plasma cell differentiation. Can be sumoylated with SUMO1 and SUMO2 by PML. Degradation of the wild-type protein mostly depends upon sumoylation, rather than ubiquitination. Desumoylated by SENP1 and SENP6. Ubiquitinated by the SCF(FBXO11) complex, leading to its degradation by the proteasome.

The protein localises to the nucleus. Its subcellular location is the cytoplasm. Transcription factor that mediates a transcriptional program in various innate and adaptive immune tissue-resident lymphocyte T cell types such as tissue-resident memory T (Trm), natural killer (trNK) and natural killer T (NKT) cells and negatively regulates gene expression of proteins that promote the egress of tissue-resident T-cell populations from non-lymphoid organs. Plays a role in the development, retention and long-term establishment of adaptive and innate tissue-resident lymphocyte T cell types in non-lymphoid organs, such as the skin and gut, but also in other nonbarrier tissues like liver and kidney, and therefore may provide immediate immunological protection against reactivating infections or viral reinfection. Binds specifically to the PRDI element in the promoter of the beta-interferon gene. Drives the maturation of B-lymphocytes into Ig secreting cells. Associates with the transcriptional repressor ZNF683 to chromatin at gene promoter regions. Binds to the promoter and acts as a transcriptional repressor of IRF8, thereby promotes transcription of osteoclast differentiation factors such as NFATC1 and EEIG1. The protein is PR domain zinc finger protein 1 (PRDM1) of Homo sapiens (Human).